The following is a 465-amino-acid chain: Apolipoprotein N-acyltransferase (465 aa).

Transmembrane regions (helical) follow at residues 12-32 (AVLG…LSML), 49-69 (ALWG…LHPL), 80-100 (LPVA…LLLL), 122-142 (LLAL…LFWI), 161-181 (WLGS…LWQL), and 189-209 (CAWW…SLSP). The CN hydrolase domain maps to 221–448 (WQPAIPTREK…DAVAAAELQR (228 aa)). Residue glutamate 262 is the Proton acceptor of the active site. Residue lysine 312 is part of the active site. Cysteine 360 functions as the Nucleophile in the catalytic mechanism.

Belongs to the CN hydrolase family. Apolipoprotein N-acyltransferase subfamily.

The protein resides in the cell inner membrane. The enzyme catalyses N-terminal S-1,2-diacyl-sn-glyceryl-L-cysteinyl-[lipoprotein] + a glycerophospholipid = N-acyl-S-1,2-diacyl-sn-glyceryl-L-cysteinyl-[lipoprotein] + a 2-acyl-sn-glycero-3-phospholipid + H(+). The protein operates within protein modification; lipoprotein biosynthesis (N-acyl transfer). Its function is as follows. Catalyzes the phospholipid dependent N-acylation of the N-terminal cysteine of apolipoprotein, the last step in lipoprotein maturation. The sequence is that of Apolipoprotein N-acyltransferase from Parasynechococcus marenigrum (strain WH8102).